The primary structure comprises 176 residues: NAD(P)H-quinone oxidoreductase subunit 6, chloroplastic (176 aa).

5 helical membrane passes run 10–30, 32–52, 61–81, 92–112, and 152–172; these read FLLV…VLLP, PIFS…LYIL, AQLL…VMFM, LWTV…FSLL, and FFLP…GAIS.

The protein belongs to the complex I subunit 6 family. In terms of assembly, NDH is composed of at least 16 different subunits, 5 of which are encoded in the nucleus.

It is found in the plastid. The protein resides in the chloroplast thylakoid membrane. It catalyses the reaction a plastoquinone + NADH + (n+1) H(+)(in) = a plastoquinol + NAD(+) + n H(+)(out). The catalysed reaction is a plastoquinone + NADPH + (n+1) H(+)(in) = a plastoquinol + NADP(+) + n H(+)(out). Its function is as follows. NDH shuttles electrons from NAD(P)H:plastoquinone, via FMN and iron-sulfur (Fe-S) centers, to quinones in the photosynthetic chain and possibly in a chloroplast respiratory chain. The immediate electron acceptor for the enzyme in this species is believed to be plastoquinone. Couples the redox reaction to proton translocation, and thus conserves the redox energy in a proton gradient. This is NAD(P)H-quinone oxidoreductase subunit 6, chloroplastic (ndhG) from Lepidium virginicum (Virginia pepperweed).